The sequence spans 502 residues: Bone morphogenetic protein receptor type-1B (502 aa).

The segment covering 1–10 (MPLLSSSKLS) has biased composition (polar residues). Positions 1–13 (MPLLSSSKLSMES) are cleaved as a signal peptide. Residues 1–27 (MPLLSSSKLSMESRKEDSEGTAPAPPQ) are disordered. At 14 to 126 (RKEDSEGTAP…DFAEGNIHHK (113 aa)) the chain is on the extracellular side. 5 disulfides stabilise this stretch: Cys-32/Cys-53, Cys-34/Cys-38, Cys-47/Cys-71, Cys-81/Cys-95, and Cys-96/Cys-102. Residue Asn-44 is glycosylated (N-linked (GlcNAc...) asparagine). The chain crosses the membrane as a helical span at residues 127–148 (ALLISVTVCSILLVLIIIFCYF). Topologically, residues 149–502 (RYKRQEARPR…KMSESQDIKL (354 aa)) are cytoplasmic. One can recognise a GS domain in the interval 174-203 (ESLKDLIEQSQSSGSGSGLPLLVQRTIAKQ). Positions 204 to 494 (IQMVKQIGKG…LRVKKTLAKM (291 aa)) constitute a Protein kinase domain. ATP-binding positions include 210-218 (IGKGRYGEV) and Lys-231. The active-site Proton acceptor is the Asp-332.

It belongs to the protein kinase superfamily. TKL Ser/Thr protein kinase family. TGFB receptor subfamily. It depends on Mg(2+) as a cofactor. Requires Mn(2+) as cofactor. Autophosphorylated.

It is found in the cell membrane. The enzyme catalyses L-threonyl-[receptor-protein] + ATP = O-phospho-L-threonyl-[receptor-protein] + ADP + H(+). It catalyses the reaction L-seryl-[receptor-protein] + ATP = O-phospho-L-seryl-[receptor-protein] + ADP + H(+). On ligand binding, forms a receptor complex consisting of two type II and two type I transmembrane serine/threonine kinases. Type II receptors phosphorylate and activate type I receptors which autophosphorylate, then bind and activate SMAD transcription. Positively regulates chondrocyte differentiation. The chain is Bone morphogenetic protein receptor type-1B (BMPR1B) from Gallus gallus (Chicken).